A 372-amino-acid chain; its full sequence is MAAERLDPWGAVEIKDYDRLLRTFGIRPFSEVLPLLRKAGMEPSFLMRRGIIFGHRDFDKILEAKARGERVAVLTGFMPSGKFHFGHKLTVDQLIYLQKNGFKVFVAIADAEAFAVRRIGREEAVRIAVEEYIANMIALGLDPKDTEFYFQTNRGTPYFRLIQLFSGKVTAAEMEAIYGELTPAKMMASLTQAADILHVQLDEYGGYRHVVVPVGADQDPHLRLTRDLADRMAGVVELERPASTYHKLQPGLDGRKMSSSRPDSTIFLTDPPEVARNKLFRALTGGRATAEEQRRLGGVPEVCSVYHMDLYHLMPDDGEVKHIYTSCRLGKILCGECKQIAWEKLERFLAEHQSRLEKAKTIAWKLVEPPRF.

A 'HIGH' region motif is present at residues 79 to 87; the sequence is PSGKFHFGH. The tract at residues 247–268 is disordered; that stretch reads KLQPGLDGRKMSSSRPDSTIFL. Positions 256-260 match the 'KMSKS' region motif; that stretch reads KMSSS. The segment covering 257 to 267 has biased composition (polar residues); sequence MSSSRPDSTIF.

Belongs to the class-I aminoacyl-tRNA synthetase family.

It localises to the cytoplasm. It carries out the reaction tRNA(Trp) + L-tryptophan + ATP = L-tryptophyl-tRNA(Trp) + AMP + diphosphate + H(+). This is Tryptophan--tRNA ligase from Aeropyrum pernix (strain ATCC 700893 / DSM 11879 / JCM 9820 / NBRC 100138 / K1).